Consider the following 327-residue polypeptide: 4-hydroxy-2-oxoglutarate aldolase, mitochondrial (327 aa).

The N-terminal 25 residues, Met-1 to Trp-25, are a transit peptide targeting the mitochondrion. A substrate-binding site is contributed by Ser-77–Asn-78. Lys-196 (schiff-base intermediate with substrate) is an active-site residue. The substrate site is built by Ser-198 and Gly-222.

Belongs to the DapA family. As to quaternary structure, homotetramer.

The protein resides in the mitochondrion. The catalysed reaction is (4S)-4-hydroxy-2-oxoglutarate = glyoxylate + pyruvate. It catalyses the reaction (4R)-4-hydroxy-2-oxoglutarate = glyoxylate + pyruvate. Its activity is regulated as follows. Inhibited by divalent cations. Functionally, catalyzes the final step in the metabolic pathway of hydroxyproline. The polypeptide is 4-hydroxy-2-oxoglutarate aldolase, mitochondrial (HOGA1) (Bos taurus (Bovine)).